Here is a 218-residue protein sequence, read N- to C-terminus: Calcineurin B-like protein 5 (218 aa).

EF-hand domains follow at residues 35-69 (EVEA…FRNK), 70-105 (KTNL…FHPD), 107-142 (PEEQ…LLDE), and 151-186 (AVEM…NPYV).

The protein belongs to the calcineurin regulatory subunit family. As to quaternary structure, homodimer. In terms of tissue distribution, expressed at low levels in roots, shoots, culms, leaves and young spikelets.

In terms of biological role, acts as a calcium sensor. CBL proteins interact with CIPK serine-threonine protein kinases. Binding of a CBL protein to the regulatory NAF domain of a CIPK protein lead to the activation of the kinase in a calcium-dependent manner. The polypeptide is Calcineurin B-like protein 5 (CBL5) (Oryza sativa subsp. japonica (Rice)).